The primary structure comprises 144 residues: Maximins 2/H8 type 2 (144 aa).

Residues 1–18 (MNFKYIVAVSFLIASAYA) form the signal peptide. The propeptide occupies 19 to 43 (RSEENEIQSLSQRDVLEEESLREIR). Asn-70 carries the asparagine amide modification. Positions 74–123 (TAEEHEVMKRLETVMRDLDSLDYPEEASERETRGFNQEEIANLFTKKEKR) are excised as a propeptide. Position 143 is an isoleucine amide (Ile-143).

It belongs to the bombinin family. Expressed by the skin glands.

The protein resides in the secreted. In terms of biological role, maximin-2 shows antibacterial activity against both Gram-positive and Gram-negative bacteria. It also shows antimicrobial activity against the fungus C.albicans, but not against A.flavus nor P.uticale. It has little hemolytic activity. Functionally, maximin-H8 shows antimicrobial activity against bacteria and against the fungus C.albicans. Shows strong hemolytic activity. This Bombina maxima (Giant fire-bellied toad) protein is Maximins 2/H8 type 2.